Consider the following 411-residue polypeptide: D-galactonate dehydratase family member SBI_01856 (411 aa).

Substrate contacts are provided by asparagine 45 and histidine 130. Tyrosine 167 functions as the Proton donor/acceptor in the catalytic mechanism. Aspartate 219 lines the Mg(2+) pocket. Residue histidine 221 is the Proton donor/acceptor of the active site. Mg(2+) is bound by residues glutamate 245 and glutamate 271. Substrate-binding residues include glutamate 271, arginine 292, histidine 321, aspartate 325, and glutamate 348.

It belongs to the mandelate racemase/muconate lactonizing enzyme family. GalD subfamily. Mg(2+) serves as cofactor.

The enzyme catalyses D-gluconate = 2-dehydro-3-deoxy-D-gluconate + H2O. Functionally, has low D-gluconate dehydratase activity (in vitro), suggesting that it has no significant role in D-gluconate degradation in vivo. Has no detectable activity with a panel of 70 other acid sugars (in vitro). In Streptomyces bingchenggensis (strain BCW-1), this protein is D-galactonate dehydratase family member SBI_01856.